Reading from the N-terminus, the 399-residue chain is Carbamoyl phosphate synthase arginine-specific small chain (399 aa).

The 193-residue stretch at 187-379 folds into the Glutamine amidotransferase type-1 domain; that stretch reads DVALVDCGVK…VERMRCYRKL (193 aa). The active-site Nucleophile is the Cys267. Catalysis depends on residues His352 and Glu354.

This sequence belongs to the CarA family. As to quaternary structure, heterodimer composed of 2 chains; the small (or glutamine) chain promotes the hydrolysis of glutamine to ammonia, which is used by the large (or ammonia) chain to synthesize carbamoyl phosphate.

The protein resides in the cytoplasm. The catalysed reaction is hydrogencarbonate + L-glutamine + 2 ATP + H2O = carbamoyl phosphate + L-glutamate + 2 ADP + phosphate + 2 H(+). The enzyme catalyses L-glutamine + H2O = L-glutamate + NH4(+). It participates in amino-acid biosynthesis; L-arginine biosynthesis; carbamoyl phosphate from bicarbonate: step 1/1. Its function is as follows. Small subunit of the arginine-specific carbamoyl phosphate synthase (CPSase). CPSase catalyzes the formation of carbamoyl phosphate from the ammonia moiety of glutamine, carbonate, and phosphate donated by ATP, constituting the first step of 2 biosynthetic pathways, one leading to arginine and/or urea and the other to pyrimidine nucleotides. The small subunit (glutamine amidotransferase) binds and cleaves glutamine to supply the large subunit with the substrate ammonia. The sequence is that of Carbamoyl phosphate synthase arginine-specific small chain (CPA1) from Eremothecium gossypii (strain ATCC 10895 / CBS 109.51 / FGSC 9923 / NRRL Y-1056) (Yeast).